The sequence spans 355 residues: Peptide chain release factor 1 (355 aa).

At glutamine 233 the chain carries N5-methylglutamine.

The protein belongs to the prokaryotic/mitochondrial release factor family. Methylated by PrmC. Methylation increases the termination efficiency of RF1.

It is found in the cytoplasm. Functionally, peptide chain release factor 1 directs the termination of translation in response to the peptide chain termination codons UAG and UAA. The protein is Peptide chain release factor 1 of Bacillus cytotoxicus (strain DSM 22905 / CIP 110041 / 391-98 / NVH 391-98).